The primary structure comprises 220 residues: uncharacterized protein (220 aa).

A run of 7 helical transmembrane segments spans residues 6–26, 33–53, 59–79, 103–123, 126–146, 157–177, and 179–199; these read FSILVDFAAGGLVLASVLIVW, IVRLLAWQGAALAAIPLLRGI, ALIAVGIAVLALRALVLPWLL, LLITAGLTLTAFAITQPVVNL, GVTINAVPAAFAVVLIALFVM, AGFLMLDNGIAATAFLLTAGV, and LIVELGASLDVLFAVIVIGVL.

It localises to the cell membrane. This is an uncharacterized protein from Mycobacterium tuberculosis (strain ATCC 25618 / H37Rv).